A 523-amino-acid chain; its full sequence is MVGIIDEVQLFYPLGTRIKIGDNYGTVRYVGEVSGHMGSWLGIEWDDGLRGKHNGIVDGKRYFQTQTPTGGSFIRPGKVGPCATLEDAARERYLNYDSSNVDESLIREAQASLQASLFEVVGMDKIARKQSKFEQLEEVSVDQTPVNAAGYLKELTHLTTLNVSHTLIWNWEIVASIAQQLPSLTNLNLSSNRLVLPTSSQITELEPSFRQLKRINLRSCGFSDWKDVMHTALLWPNILSLGLQENSLGQLAEVDRTKIFKQLHELDLHRTNIMDFDQVTKLGNLTTLRLLNIMENGIEEIKLPDCDSQEKLNIFVSLEQLNLLHNPIWNEADAFNELDKLPQLKRLSKTPHLKSNFDEMFSKAVASIASLQFINKAEVTAEQRRGAEYDIWKKYALDWMQATQGGTDSLREFCRRHRTYPLLVKKYGSPADFVPRSQAKQSNLINVSIRHQLTGETWEKKVPRMITVQTLQGLVMKRFRLSGDVPQLCYVDALHPDLVVPLDNNAKTLDFYSVQEHDTVLVQ.

The CAP-Gly domain occupies 31–75 (GEVSGHMGSWLGIEWDDGLRGKHNGIVDGKRYFQTQTPTGGSFIR). LRR repeat units follow at residues 155-180 (LTHLTTLNVSHTLIWNWEIVASIAQQ), 181-204 (LPSLTNLNLSSNRLVLPTSSQITE), 209-232 (FRQLKRINLRSCGFSDWKDVMHTA), 235-258 (WPNILSLGLQENSLGQLAEVDRTK), 260-284 (FKQLHELDLHRTNIMDFDQVTKLGN), 285-310 (LTTLRLLNIMENGIEEIKLPDCDSQE), and 315-337 (FVSLEQLNLLHNPIWNEADAFNE).

It belongs to the TBCE family.

The protein resides in the cytoplasm. Its function is as follows. Tubulin-folding protein which is required for the development of the neuronal microtubule network. Essential for the development and function of neuromuscular synapses. Likely to promote microtubule formation by acting in the negative regulation of the microtubule-severing protein spas. This Drosophila melanogaster (Fruit fly) protein is Tubulin-specific chaperone E.